A 368-amino-acid polypeptide reads, in one-letter code: Cobalt-precorrin-5B C(1)-methyltransferase (368 aa).

The protein belongs to the CbiD family.

It carries out the reaction Co-precorrin-5B + S-adenosyl-L-methionine = Co-precorrin-6A + S-adenosyl-L-homocysteine. The protein operates within cofactor biosynthesis; adenosylcobalamin biosynthesis; cob(II)yrinate a,c-diamide from sirohydrochlorin (anaerobic route): step 6/10. Functionally, catalyzes the methylation of C-1 in cobalt-precorrin-5B to form cobalt-precorrin-6A. In Synechococcus sp. (strain CC9605), this protein is Cobalt-precorrin-5B C(1)-methyltransferase.